The primary structure comprises 402 residues: Putative F-box protein At4g22180 (402 aa).

One can recognise an F-box domain in the interval 18-64 (PNSWSELPLDLLTAVFERLSYANFQRAKSVCSSWHSGSRQSVPIQIP).

This Arabidopsis thaliana (Mouse-ear cress) protein is Putative F-box protein At4g22180.